We begin with the raw amino-acid sequence, 146 residues long: Probable calcium-binding protein CML32 (146 aa).

EF-hand domains are found at residues methionine 1–serine 33, isoleucine 34–glycine 69, aspartate 73–lysine 108, and glutamine 109–lysine 144. 19 residues coordinate Ca(2+): aspartate 11, asparagine 13, aspartate 15, lysine 17, glutamate 22, aspartate 47, aspartate 49, aspartate 51, glutamine 53, glutamate 58, aspartate 86, aspartate 88, aspartate 90, lysine 92, glutamate 97, aspartate 122, aspartate 124, aspartate 126, and glutamate 133.

Potential calcium sensor. This chain is Probable calcium-binding protein CML32 (CML32), found in Arabidopsis thaliana (Mouse-ear cress).